The chain runs to 124 residues: Small ribosomal subunit protein uS13 (124 aa).

The disordered stretch occupies residues 95 to 124; that stretch reads GLPVRGQRTKTNARTRKGPKRTIAGKKKAR.

The protein belongs to the universal ribosomal protein uS13 family. In terms of assembly, part of the 30S ribosomal subunit. Forms a loose heterodimer with protein S19. Forms two bridges to the 50S subunit in the 70S ribosome.

Functionally, located at the top of the head of the 30S subunit, it contacts several helices of the 16S rRNA. In the 70S ribosome it contacts the 23S rRNA (bridge B1a) and protein L5 of the 50S subunit (bridge B1b), connecting the 2 subunits; these bridges are implicated in subunit movement. Contacts the tRNAs in the A and P-sites. In Mycobacterium avium (strain 104), this protein is Small ribosomal subunit protein uS13.